Here is a 450-residue protein sequence, read N- to C-terminus: 5-amino-6-(D-ribitylamino)uracil--L-tyrosine 4-hydroxyphenyl transferase (450 aa).

Residues 1–24 (MPDVPETVGTPDGSTEFEHRPTTD) form a disordered region. In terms of domain architecture, Radical SAM core spans 82–350 (VTFVANLNNN…MIAVSRLFLD (269 aa)). C96, C100, and C103 together coordinate [4Fe-4S] cluster. The tract at residues 430–450 (PDADVLGPQLGPRADGTPLLD) is disordered.

The protein belongs to the radical SAM superfamily. CofH family. As to quaternary structure, consists of two subunits, CofG and CofH. Requires [4Fe-4S] cluster as cofactor.

It catalyses the reaction 5-amino-6-(D-ribitylamino)uracil + L-tyrosine + S-adenosyl-L-methionine = 5-amino-5-(4-hydroxybenzyl)-6-(D-ribitylimino)-5,6-dihydrouracil + 2-iminoacetate + 5'-deoxyadenosine + L-methionine + H(+). It participates in cofactor biosynthesis; coenzyme F0 biosynthesis. Catalyzes the radical-mediated synthesis of 5-amino-5-(4-hydroxybenzyl)-6-(D-ribitylimino)-5,6-dihydrouracil from 5-amino-6-(D-ribitylamino)uracil and L-tyrosine. This is 5-amino-6-(D-ribitylamino)uracil--L-tyrosine 4-hydroxyphenyl transferase from Haloarcula marismortui (strain ATCC 43049 / DSM 3752 / JCM 8966 / VKM B-1809) (Halobacterium marismortui).